Reading from the N-terminus, the 273-residue chain is Undecaprenyl-diphosphatase (273 aa).

The next 6 helical transmembrane spans lie at Leu46–Tyr63, Phe83–Lys103, Leu109–Val129, Ala184–Leu204, Ala218–Leu238, and Phe249–Val269.

It belongs to the UppP family.

It is found in the cell inner membrane. It carries out the reaction di-trans,octa-cis-undecaprenyl diphosphate + H2O = di-trans,octa-cis-undecaprenyl phosphate + phosphate + H(+). Catalyzes the dephosphorylation of undecaprenyl diphosphate (UPP). Confers resistance to bacitracin. The protein is Undecaprenyl-diphosphatase of Methylococcus capsulatus (strain ATCC 33009 / NCIMB 11132 / Bath).